Here is a 56-residue protein sequence, read N- to C-terminus: uncharacterized protein (56 aa).

This is an uncharacterized protein from Borreliella burgdorferi (strain ATCC 35210 / DSM 4680 / CIP 102532 / B31) (Borrelia burgdorferi).